Here is a 285-residue protein sequence, read N- to C-terminus: BAG family molecular chaperone regulator 2 (285 aa).

The 77-residue stretch at 37 to 113 folds into the Ubiquitin-like domain; sequence RGIRVRVKYG…LILIEDPISQ (77 aa). Residues 132–210 enclose the BAG domain; the sequence is AISDISFQVE…KYVEALDLLK (79 aa). Position 244 is a phosphoserine (serine 244).

As to quaternary structure, binds to the ATPase domain of HSP70/HSC70 chaperones.

Co-chaperone that regulates diverse cellular pathways, such as programmed cell death and stress responses. This chain is BAG family molecular chaperone regulator 2 (BAG2), found in Arabidopsis thaliana (Mouse-ear cress).